The chain runs to 100 residues: Urease subunit gamma (100 aa).

Belongs to the urease gamma subunit family. Heterotrimer of UreA (gamma), UreB (beta) and UreC (alpha) subunits. Three heterotrimers associate to form the active enzyme.

It localises to the cytoplasm. It catalyses the reaction urea + 2 H2O + H(+) = hydrogencarbonate + 2 NH4(+). The protein operates within nitrogen metabolism; urea degradation; CO(2) and NH(3) from urea (urease route): step 1/1. This Saccharopolyspora erythraea (strain ATCC 11635 / DSM 40517 / JCM 4748 / NBRC 13426 / NCIMB 8594 / NRRL 2338) protein is Urease subunit gamma.